The following is a 465-amino-acid chain: tRNA modification GTPase MnmE (465 aa).

Residues arginine 23, glutamate 81, and lysine 120 each contribute to the (6S)-5-formyl-5,6,7,8-tetrahydrofolate site. The TrmE-type G domain maps to 217–389 (GVHVVLAGRP…LIASLCDKVG (173 aa)). A K(+)-binding site is contributed by asparagine 227. GTP is bound by residues 227-232 (NAGKSS), 246-252 (TDVAGTT), and 271-274 (DTAG). Mg(2+) is bound at residue serine 231. Residues threonine 246, valine 248, and threonine 251 each coordinate K(+). Threonine 252 is a binding site for Mg(2+). (6S)-5-formyl-5,6,7,8-tetrahydrofolate is bound at residue lysine 465.

Belongs to the TRAFAC class TrmE-Era-EngA-EngB-Septin-like GTPase superfamily. TrmE GTPase family. In terms of assembly, homodimer. Heterotetramer of two MnmE and two MnmG subunits. K(+) is required as a cofactor.

The protein localises to the cytoplasm. Exhibits a very high intrinsic GTPase hydrolysis rate. Involved in the addition of a carboxymethylaminomethyl (cmnm) group at the wobble position (U34) of certain tRNAs, forming tRNA-cmnm(5)s(2)U34. This chain is tRNA modification GTPase MnmE, found in Psychrobacter sp. (strain PRwf-1).